The sequence spans 330 residues: Endo-1,4-beta-xylanase (330 aa).

Residues 2–330 (CSSIPSLREV…KPAFWRVVNI (329 aa)) form the GH10 domain. The active-site Proton donor is the Glu-133. The active-site Nucleophile is the Glu-240.

It belongs to the glycosyl hydrolase 10 (cellulase F) family. Cytoplasmic xylanase subfamily.

It is found in the cytoplasm. It carries out the reaction Endohydrolysis of (1-&gt;4)-beta-D-xylosidic linkages in xylans.. The protein operates within glycan degradation; xylan degradation. The sequence is that of Endo-1,4-beta-xylanase (xynA) from Geobacillus stearothermophilus (Bacillus stearothermophilus).